Consider the following 339-residue polypeptide: Heat-inducible transcription repressor HrcA (339 aa).

This sequence belongs to the HrcA family.

Negative regulator of class I heat shock genes (grpE-dnaK-dnaJ and groELS operons). Prevents heat-shock induction of these operons. The sequence is that of Heat-inducible transcription repressor HrcA from Thiobacillus denitrificans (strain ATCC 25259 / T1).